The chain runs to 124 residues: Small ribosomal subunit protein uS12 (124 aa).

Residues 1–24 (MPTISQLVRKGRAKITKKSKSAAL) form a disordered region. The span at 9–20 (RKGRAKITKKSK) shows a compositional bias: basic residues. D89 carries the 3-methylthioaspartic acid modification. Residues 105-124 (AGVEGRTQRRSKYGAKRPKK) form a disordered region. Residues 112–124 (QRRSKYGAKRPKK) are compositionally biased toward basic residues.

This sequence belongs to the universal ribosomal protein uS12 family. Part of the 30S ribosomal subunit. Contacts proteins S8 and S17. May interact with IF1 in the 30S initiation complex.

Its function is as follows. With S4 and S5 plays an important role in translational accuracy. Interacts with and stabilizes bases of the 16S rRNA that are involved in tRNA selection in the A site and with the mRNA backbone. Located at the interface of the 30S and 50S subunits, it traverses the body of the 30S subunit contacting proteins on the other side and probably holding the rRNA structure together. The combined cluster of proteins S8, S12 and S17 appears to hold together the shoulder and platform of the 30S subunit. The sequence is that of Small ribosomal subunit protein uS12 from Christiangramia forsetii (strain DSM 17595 / CGMCC 1.15422 / KT0803) (Gramella forsetii).